The following is a 142-amino-acid chain: Large ribosomal subunit protein uL13 (142 aa).

The protein belongs to the universal ribosomal protein uL13 family. In terms of assembly, part of the 50S ribosomal subunit.

Functionally, this protein is one of the early assembly proteins of the 50S ribosomal subunit, although it is not seen to bind rRNA by itself. It is important during the early stages of 50S assembly. The protein is Large ribosomal subunit protein uL13 of Syntrophotalea carbinolica (strain DSM 2380 / NBRC 103641 / GraBd1) (Pelobacter carbinolicus).